The following is a 190-amino-acid chain: Putative manganese efflux pump MntP (190 aa).

Helical transmembrane passes span 3 to 23 (PISLLFLALAMSTDAFAAALG), 41 to 61 (LIFGAIETITPVIGWGIGQVA), 69 to 89 (DHWIAFTLLLVLGLHMIYNGI), 105 to 125 (FWILAVTAFATSIDALAVGVG), 133 to 153 (IVVAALAIGLATTVMVTIGVM), and 168 to 188 (IIGGIVLIVVGATILYEHLSA).

The protein belongs to the MntP (TC 9.B.29) family.

The protein localises to the cell inner membrane. Its function is as follows. Probably functions as a manganese efflux pump. The polypeptide is Putative manganese efflux pump MntP (Pseudomonas syringae pv. syringae (strain B728a)).